The sequence spans 269 residues: 4-hydroxy-tetrahydrodipicolinate reductase (269 aa).

NAD(+) is bound by residues 8–13 (GAAGRM) and E34. Position 35 (R35) interacts with NADP(+). NAD(+) contacts are provided by residues 98–100 (GTT) and 122–125 (APNY). H155 functions as the Proton donor/acceptor in the catalytic mechanism. (S)-2,3,4,5-tetrahydrodipicolinate is bound at residue H156. Catalysis depends on K159, which acts as the Proton donor. (S)-2,3,4,5-tetrahydrodipicolinate is bound at residue 165–166 (GT).

Belongs to the DapB family.

It is found in the cytoplasm. The enzyme catalyses (S)-2,3,4,5-tetrahydrodipicolinate + NAD(+) + H2O = (2S,4S)-4-hydroxy-2,3,4,5-tetrahydrodipicolinate + NADH + H(+). The catalysed reaction is (S)-2,3,4,5-tetrahydrodipicolinate + NADP(+) + H2O = (2S,4S)-4-hydroxy-2,3,4,5-tetrahydrodipicolinate + NADPH + H(+). It functions in the pathway amino-acid biosynthesis; L-lysine biosynthesis via DAP pathway; (S)-tetrahydrodipicolinate from L-aspartate: step 4/4. In terms of biological role, catalyzes the conversion of 4-hydroxy-tetrahydrodipicolinate (HTPA) to tetrahydrodipicolinate. This is 4-hydroxy-tetrahydrodipicolinate reductase from Vibrio parahaemolyticus serotype O3:K6 (strain RIMD 2210633).